The following is a 575-amino-acid chain: uncharacterized protein (575 aa).

An HTH marR-type domain is found at 1–120; that stretch reads MKLIEHYVAL…YNMWLSEVFG (120 aa). The H-T-H motif DNA-binding region spans 26–49; the sequence is LTEIADCLFCTERNAKLILHKLEN. Residues 176–490 form a solute-binding region region; sequence EPKPHLVHGW…FGFLHLLLSE (315 aa).

The protein in the C-terminal section; belongs to the bacterial solute-binding protein 5 family.

This is an uncharacterized protein from Bacillus subtilis (strain 168).